The sequence spans 370 residues: MKLMELTPWETPAVIDYKKTMEQFGVKPIVDVLGDLKEEHHFFRRNIILGHRDFERIVDAIKNNKEFAVVSGMMPSGKMHFGHKMVVDLLKFYQKYTDNINIPIADLEAYWARNMSFETTKELALNEYITNYIALGLDPEKINVYLQSKYQKVKDLALILSKRTNWSEMKAIYGFKGETNIGHVFAPIVQVADILHPQLDENLSPEPKPVVVPVGIDQDPHIRLTRDIANRAKEFKFIPPSSTYHRFMTGLLGGKMSSSKPETAIFLTDDEKTVKKKIFSAKTGGRETLEEHKKYGGVPEECVVYELFLYHLILDDKELAEIYQKCRSGELTCGKCKKMAYERVVEFLKDLKEKREQAKEIAVKILEGKY.

The short motif at 75–83 (PSGKMHFGH) is the 'HIGH' region element. Residues 255-259 (KMSSS) carry the 'KMSKS' region motif.

Belongs to the class-I aminoacyl-tRNA synthetase family.

The protein localises to the cytoplasm. The catalysed reaction is tRNA(Trp) + L-tryptophan + ATP = L-tryptophyl-tRNA(Trp) + AMP + diphosphate + H(+). The sequence is that of Tryptophan--tRNA ligase from Methanocaldococcus jannaschii (strain ATCC 43067 / DSM 2661 / JAL-1 / JCM 10045 / NBRC 100440) (Methanococcus jannaschii).